Reading from the N-terminus, the 491-residue chain is 23S rRNA (uracil(1939)-C(5))-methyltransferase RlmD (491 aa).

A compositionally biased stretch (basic and acidic residues) spans 1–10 (MSDPTEHPEI). The disordered stretch occupies residues 1–28 (MSDPTEHPEILQDPSSSAPVQGRTDLPP). Positions 18 to 81 (APVQGRTDLP…NNWEQASLTA (64 aa)) constitute a TRAM domain. 4 residues coordinate [4Fe-4S] cluster: C94, C104, C107, and C186. Q294, F323, N328, E344, N379, and D400 together coordinate S-adenosyl-L-methionine. The active-site Nucleophile is the C447.

This sequence belongs to the class I-like SAM-binding methyltransferase superfamily. RNA M5U methyltransferase family. RlmD subfamily.

The enzyme catalyses uridine(1939) in 23S rRNA + S-adenosyl-L-methionine = 5-methyluridine(1939) in 23S rRNA + S-adenosyl-L-homocysteine + H(+). Its function is as follows. Catalyzes the formation of 5-methyl-uridine at position 1939 (m5U1939) in 23S rRNA. The chain is 23S rRNA (uracil(1939)-C(5))-methyltransferase RlmD from Paracidovorax citrulli (strain AAC00-1) (Acidovorax citrulli).